Reading from the N-terminus, the 454-residue chain is Septin-10 (454 aa).

Positions 63–329 (QGFCFNILCV…ELYRRCKLEE (267 aa)) constitute a Septin-type G domain. The G1 motif stretch occupies residues 73 to 80 (GETGIGKS). GTP is bound by residues 73 to 80 (GETGIGKS), glycine 128, 209 to 217 (KADTVSKTE), glycine 263, and arginine 278. The segment at 125–128 (NTVG) is G3 motif. The segment at 208-211 (AKAD) is G4 motif.

The protein belongs to the TRAFAC class TrmE-Era-EngA-EngB-Septin-like GTPase superfamily. Septin GTPase family. Septins polymerize into heterooligomeric protein complexes that form filaments, and can associate with cellular membranes, actin filaments and microtubules. GTPase activity is required for filament formation. Interacts with ADGB. Proteolytically cleaved in vitro in a calmodulin-dependent manner. In terms of tissue distribution, widely expressed. Abundantly expressed in heart and kidney, placenta, skeletal muscles, liver and lung, as well as various tumor cell lines.

The protein localises to the cytoplasm. Its subcellular location is the cytoskeleton. It is found in the cell projection. It localises to the cilium. The protein resides in the flagellum. In terms of biological role, filament-forming cytoskeletal GTPase. May play a role in cytokinesis (Potential). This chain is Septin-10, found in Homo sapiens (Human).